Here is a 1076-residue protein sequence, read N- to C-terminus: MESSIFKPSSMDLIRAGLQDLDKARALFDQLKADDIPDERCAELLSALAHACDPDMALSNFVDIVNAMQSSQRDLEHVIPDNDALKRLVTVLGVSDAMGKFMRFKPQLVEAAAVDNCNSHLFNHAQRRARLLKAVGADPDEPAMPVASKDLAEAATALRSSYRNQLAAIIAQDAVADDPTSIQPTISRELSDLADAALEGALAIARHETEGSEHVRFTIIGMGKLGAQELNYVSDVDLIYVVEPADKDVDHQTLIRVGTKMGTMLQRVCQSAIMGVAEQPLWQIDGGLRPEGKDGALVRVLSSHKNYYEQWAENWEFQALLKARPVAGDPDLGQAYMDMTRPFVWSASKRKNFVYDCQKMRKRVEDLIPAPLKDREIKLGRGGLRDVEFTVQMLQLVHGRTDESLRTSNTLDSLQRLSEGGYVSRKQAVRMSQDYRFERVMEHRQQIWSLKRTHLFPDLGRASVGGLEKKRDIDVDELNQNQELRRLARAFGLHPEELVDKYDDTRREVRHLHLDIYYRPMLPVNAQMENDQIVLSVEAAQERFESIGFGDPDAAIRHVQALTAGVGRAAKINRIILPAVLQWLGEGQNPDMGLLNWRKLEENFGTESGYLGFLRDSTSAAQRLCHILSNSRFLGDALNKSVESISWLGDDDNLQARTREALDVQTGSALERFGSNINEFATSMRAMRRHEIERIGLSWMSGVISDSDSLKAMTDVYDAIIDASLTWAVRHQIAEFGVETAPAGITVIAMGRYGGREVNFSSDADAILIYRPADDADDGQANAFAKKVVEDLRNILQGPTTLEPKIELDLDLRPEGKNGPLVRSYASCEEYYESWASTWERQALLRARYAAGDAELARDFLINIADPLRYPTTELTEAELQNIRKLKARMEAERLPRGVRRERHLKLGKGGLSDVEWTVQLMQLQHAGDIKDLRVNGTLEALDVLEAKKLISAIDAIQLRKAWTLCTAARNGSYLWSGRANQADILPDDIYSLGGIAVYLGYGAHRGQHFENDLLAVMRKCRDVCQRLFYGKTEGEAAAATTATASAATQQPQTAPRPRMHVIAPRLERNRRRAQR.

Residues 1 to 521 are adenylyl removase; the sequence is MESSIFKPSS…LHLDIYYRPM (521 aa). Positions 524 to 1076 are adenylyl transferase; that stretch reads VNAQMENDQI…LERNRRRAQR (553 aa). Positions 1042-1056 are enriched in low complexity; sequence TATASAATQQPQTAP. The tract at residues 1042-1076 is disordered; that stretch reads TATASAATQQPQTAPRPRMHVIAPRLERNRRRAQR.

Belongs to the GlnE family. It depends on Mg(2+) as a cofactor.

The enzyme catalyses [glutamine synthetase]-O(4)-(5'-adenylyl)-L-tyrosine + phosphate = [glutamine synthetase]-L-tyrosine + ADP. The catalysed reaction is [glutamine synthetase]-L-tyrosine + ATP = [glutamine synthetase]-O(4)-(5'-adenylyl)-L-tyrosine + diphosphate. In terms of biological role, involved in the regulation of glutamine synthetase GlnA, a key enzyme in the process to assimilate ammonia. When cellular nitrogen levels are high, the C-terminal adenylyl transferase (AT) inactivates GlnA by covalent transfer of an adenylyl group from ATP to specific tyrosine residue of GlnA, thus reducing its activity. Conversely, when nitrogen levels are low, the N-terminal adenylyl removase (AR) activates GlnA by removing the adenylyl group by phosphorolysis, increasing its activity. The regulatory region of GlnE binds the signal transduction protein PII (GlnB) which indicates the nitrogen status of the cell. The protein is Bifunctional glutamine synthetase adenylyltransferase/adenylyl-removing enzyme of Bifidobacterium longum (strain DJO10A).